We begin with the raw amino-acid sequence, 204 residues long: Leucyl/phenylalanyl-tRNA--protein transferase (204 aa).

The protein belongs to the L/F-transferase family.

Its subcellular location is the cytoplasm. The enzyme catalyses N-terminal L-lysyl-[protein] + L-leucyl-tRNA(Leu) = N-terminal L-leucyl-L-lysyl-[protein] + tRNA(Leu) + H(+). It catalyses the reaction N-terminal L-arginyl-[protein] + L-leucyl-tRNA(Leu) = N-terminal L-leucyl-L-arginyl-[protein] + tRNA(Leu) + H(+). It carries out the reaction L-phenylalanyl-tRNA(Phe) + an N-terminal L-alpha-aminoacyl-[protein] = an N-terminal L-phenylalanyl-L-alpha-aminoacyl-[protein] + tRNA(Phe). Functionally, functions in the N-end rule pathway of protein degradation where it conjugates Leu, Phe and, less efficiently, Met from aminoacyl-tRNAs to the N-termini of proteins containing an N-terminal arginine or lysine. In Rhizobium johnstonii (strain DSM 114642 / LMG 32736 / 3841) (Rhizobium leguminosarum bv. viciae), this protein is Leucyl/phenylalanyl-tRNA--protein transferase.